The sequence spans 98 residues: Conotoxin Di19A (98 aa).

An N-terminal signal peptide occupies residues Met1 to Pro19. Residues Ala20–Arg49 constitute a propeptide that is removed on maturation. Pro53 is subject to 4-hydroxyproline. The residue at position 63 (Glu63) is a 4-carboxyglutamate. Residues Pro68, Pro93, and Pro97 each carry the 4-hydroxyproline modification.

Post-translationally, contains 5 disulfide bonds. In terms of tissue distribution, expressed by the venom duct.

It localises to the secreted. Functionally, injection of the synthetic peptide causes a hyperexcitable phenotype in mice greater than three weeks of age at lower doses, and lethargy at higher doses. The protein is Conotoxin Di19A of Conus distans (Distant cone).